The sequence spans 246 residues: 1-(5-phosphoribosyl)-5-[(5-phosphoribosylamino)methylideneamino] imidazole-4-carboxamide isomerase (246 aa).

The active-site Proton acceptor is the Asp10. Asp131 serves as the catalytic Proton donor.

The protein belongs to the HisA/HisF family.

The protein resides in the cytoplasm. The enzyme catalyses 1-(5-phospho-beta-D-ribosyl)-5-[(5-phospho-beta-D-ribosylamino)methylideneamino]imidazole-4-carboxamide = 5-[(5-phospho-1-deoxy-D-ribulos-1-ylimino)methylamino]-1-(5-phospho-beta-D-ribosyl)imidazole-4-carboxamide. It functions in the pathway amino-acid biosynthesis; L-histidine biosynthesis; L-histidine from 5-phospho-alpha-D-ribose 1-diphosphate: step 4/9. In Acidiphilium cryptum (strain JF-5), this protein is 1-(5-phosphoribosyl)-5-[(5-phosphoribosylamino)methylideneamino] imidazole-4-carboxamide isomerase.